Consider the following 94-residue polypeptide: Small ribosomal subunit protein bS16 (94 aa).

This sequence belongs to the bacterial ribosomal protein bS16 family.

In Thermosipho africanus (strain TCF52B), this protein is Small ribosomal subunit protein bS16.